Here is an 808-residue protein sequence, read N- to C-terminus: Envelope glycoprotein H (808 aa).

Residues 1–17 (MKFYCLIRFMIIANLYS) form the signal peptide. Over 18–761 (SYQISLPGTY…ESERVTIISA (744 aa)) the chain is Virion surface. Asn-44, Asn-60, Asn-114, Asn-240, Asn-272, Asn-431, Asn-461, Asn-719, and Asn-742 each carry an N-linked (GlcNAc...) asparagine; by host glycan. An interaction with gL region spans residues 205-266 (AGMEILMKMG…GTGRPHWIYL (62 aa)). A helical membrane pass occupies residues 762–782 (TYIATAVAGSIIALTVIVITV). Topologically, residues 783–808 (RMIIINMRYNYQGYNKVIDVDDDIRN) are intravirion.

It belongs to the herpesviridae glycoprotein H family. As to quaternary structure, interacts with glycoprotein L (gL); this interaction is necessary for the correct processing and cell surface expression of gH. The heterodimer gH/gL seems to interact with gB trimers during fusion. N-glycosylated, O-glycosylated, and sialylated.

The protein resides in the virion membrane. The protein localises to the host cell membrane. It is found in the host endosome membrane. The heterodimer glycoprotein H-glycoprotein L is required for the fusion of viral and plasma membranes leading to virus entry into the host cell. Following initial binding to host receptor, membrane fusion is mediated by the fusion machinery composed of gB and the heterodimer gH/gL. May also be involved in the fusion between the virion envelope and the outer nuclear membrane during virion morphogenesis. The polypeptide is Envelope glycoprotein H (Gallus gallus (Chicken)).